The primary structure comprises 400 residues: Keratin, type I cytoskeletal 19 (400 aa).

The head stretch occupies residues 1–79 (MTSYSYRQSS…TASDGLLAGN (79 aa)). An Omega-N-methylarginine modification is found at R7. Phosphoserine occurs at positions 14 and 22. R24 carries the post-translational modification Asymmetric dimethylarginine; alternate. An Omega-N-methylarginine; alternate modification is found at R24. Position 32 is an omega-N-methylarginine (R32). Phosphoserine occurs at positions 35 and 40. Residues R43 and R51 each carry the omega-N-methylarginine modification. 2 positions are modified to phosphoserine: S57 and S72. The interval 80–115 (EKLTMQNLNDRLASYLDKVRALEAANGELEVKIRDW) is coil 1A. The IF rod domain maps to 80-391 (EKLTMQNLND…SLLEGQEDHY (312 aa)). Residues 116–133 (YQKQGPGPSRDYSHYYTT) are linker 1. The segment at 134–225 (IQDLRDKILG…KNHEEEISTL (92 aa)) is coil 1B. Residues 226–248 (RGQVGGQVSVEVDSAPGTDLAKI) are linker 12. Positions 244 to 390 (DLAKILSDMR…RSLLEGQEDH (147 aa)) are necessary for interaction with PNN. A coil 2 region spans residues 249–387 (LSDMRSQYEV…ATYRSLLEGQ (139 aa)). T323 is modified (phosphothreonine). Residues 388–400 (EDHYSNLSASKVL) are rod-like helical tail. Y391 is modified (phosphotyrosine). Position 395 is a phosphoserine (S395).

This sequence belongs to the intermediate filament family. As to quaternary structure, heterotetramer of two type I and two type II keratins. Interacts with PNN and the actin-binding domain of DMD.

Functionally, involved in the organization of myofibers. Together with KRT8, helps to link the contractile apparatus to dystrophin at the costameres of striated muscle. The protein is Keratin, type I cytoskeletal 19 of Pongo abelii (Sumatran orangutan).